Consider the following 388-residue polypeptide: Protein-glutamate methylesterase/protein-glutamine glutaminase 1 (388 aa).

In terms of domain architecture, Response regulatory spans 4–121 (QVLVVDDSSF…ATNKDEAIRL (118 aa)). 4-aspartylphosphate is present on D55. A disordered region spans residues 149-190 (SARAGLSSTSPTLGSSTLGRSPASGLASSASRNSPTVSTPAS). Residues 153–169 (GLSSTSPTLGSSTLGRS) show a composition bias toward low complexity. Positions 174-189 (LASSASRNSPTVSTPA) are enriched in polar residues. A CheB-type methylesterase domain is found at 188–388 (PASAIRASGK…EAILKESGRG (201 aa)). Residues S207, H234, and D330 contribute to the active site.

Belongs to the CheB family. Post-translationally, phosphorylated by CheA. Phosphorylation of the N-terminal regulatory domain activates the methylesterase activity.

The protein localises to the cytoplasm. The catalysed reaction is [protein]-L-glutamate 5-O-methyl ester + H2O = L-glutamyl-[protein] + methanol + H(+). The enzyme catalyses L-glutaminyl-[protein] + H2O = L-glutamyl-[protein] + NH4(+). Its function is as follows. Involved in chemotaxis. Part of a chemotaxis signal transduction system that modulates chemotaxis in response to various stimuli. Catalyzes the demethylation of specific methylglutamate residues introduced into the chemoreceptors (methyl-accepting chemotaxis proteins or MCP) by CheR. Also mediates the irreversible deamidation of specific glutamine residues to glutamic acid. The chain is Protein-glutamate methylesterase/protein-glutamine glutaminase 1 from Shewanella denitrificans (strain OS217 / ATCC BAA-1090 / DSM 15013).